The primary structure comprises 416 residues: PRKCA-binding protein (416 aa).

Positions 22–105 (KVTLQKDAQN…EVTIHYNKLQ (84 aa)) constitute a PDZ domain. Residues Cys-44 and Cys-46 each contribute to the Zn(2+) site. Thr-82 is subject to Phosphothreonine. Residues 144 to 357 (LCNDGLVKRL…CYAVLRDADV (214 aa)) form the AH domain. The segment at 373–416 (PNQGGFTDGEDEEEEEEDGAAREVSKDARGATGPTDKGGSWCDS) is disordered. Acidic residues predominate over residues 380–390 (DGEDEEEEEED). Basic and acidic residues predominate over residues 391-401 (GAAREVSKDAR). The S-palmitoyl cysteine; by DHHC8 moiety is linked to residue Cys-414.

As to quaternary structure, monomer and homodimer. Interacts with CXADR. Interacts presynaptically with the glutamate receptors GRIA2, GRIA3, GRIK3, isoform 3 of GRIA4, isoform A of GRM4, GRM7 and GRM8; with NAPA and NAPB; and with BTG2. The interaction with NAPA and NAPB disrupts the interaction with GRIA2, conducting to the internalization of GRIA2. Interacts with PRKCA; with the amine transporters SLC6A2 and SLC6A3; with the channels ASIC1 and ASIC2; with the GTP-binding proteins ARF1 and ARF3; with the ephrin receptor tyrosine kinases EPHA7, EPHB1 and EPHB2; with ERBB2 and through its PDZ domain with the C-terminal tail of PRLHR. Interacts with UNC5A. Interacts (via AH domain) with NCS1/FREQ; in a calcium-dependent manner. Interacts with F-actin and associates with the ARP2/3 complex. Interacts (via PDZ domain) with ARF1 (activated); the interaction blocks Arp2/3 complex inhibition. Interacts with SORCS3. Phosphorylation at Thr-82 appears to inhibit the interaction with AMPA receptors. In terms of processing, palmitoylation on Cys-414 is essential for long-term synaptic depression (LTD). As to expression, ubiquitous.

It localises to the cytoplasm. The protein resides in the perinuclear region. Its subcellular location is the membrane. The protein localises to the postsynaptic density. It is found in the synapse. It localises to the synaptosome. The protein resides in the cytoskeleton. Its function is as follows. Probable adapter protein that bind to and organize the subcellular localization of a variety of membrane proteins containing some PDZ recognition sequence. Involved in the clustering of various receptors, possibly by acting at the receptor internalization level. Plays a role in synaptic plasticity by regulating the trafficking and internalization of AMPA receptors. May be regulated upon PRKCA activation. May regulate ASIC1/ASIC3 channel. Regulates actin polymerization by inhibiting the actin-nucleating activity of the Arp2/3 complex; the function is competitive with nucleation promoting factors and is linked to neuronal morphology regulation and AMPA receptor (AMPAR) endocytosis. Via interaction with the Arp2/3 complex involved in regulation of synaptic plasicity of excitatory synapses and required for spine shrinkage during long-term depression (LTD). Involved in regulation of astrocyte morphology, antagonistic to Arp2/3 complex activator WASL/N-WASP function. This Rattus norvegicus (Rat) protein is PRKCA-binding protein (Pick1).